Reading from the N-terminus, the 359-residue chain is MEMFDGLKIYGSGNYLEGVTDRDSLFICAVATTETSRIPGITGAGASPELTEYTPAADVELIVHDAPRCLPEIPQTIVEGEAAPTPAVITKAALELAEVPFMVADAGASVKPDVPYININSEPGGDIRTGRAVTEPQRIYERGLMVGRTLSSLTEHLVVGESTPAGTTTALGVLTALGYDADFRVSASMPHNPHDLKREVVMAGLSNAGIEKGDCSREPFRAVEAVGDPMIPAVAGICMGSTVPVTLAGGTQMTAVCALMRAIDPDFDFSDTAIATTIFVAEDSTSDINRIAEQIGDIDIYVVDPDFGSASHRGLHEYLNGSVKEGVGAGGAMLLALLHGIPVEMVRERIEELCNTILA.

The protein belongs to the UPF0284 family.

This chain is UPF0284 protein MTH_1426, found in Methanothermobacter thermautotrophicus (strain ATCC 29096 / DSM 1053 / JCM 10044 / NBRC 100330 / Delta H) (Methanobacterium thermoautotrophicum).